Here is a 253-residue protein sequence, read N- to C-terminus: HTH-type transcriptional regulator AdiY (253 aa).

Positions 149-246 (DSVYQIIESD…GMTPLHYVSQ (98 aa)) constitute an HTH araC/xylS-type domain. DNA-binding regions (H-T-H motif) lie at residues 166-187 (SMVA…KSEN) and 213-236 (ISQV…KDFY).

The polypeptide is HTH-type transcriptional regulator AdiY (adiY) (Escherichia coli (strain K12)).